The primary structure comprises 445 residues: Chromosome partition protein MukF (445 aa).

The tract at residues 213 to 241 (LSETSSTLRELQDTLQAASDELQTQILDI) is leucine-zipper.

This sequence belongs to the MukF family. Interacts, and probably forms a ternary complex, with MukE and MukB via its C-terminal region. The complex formation is stimulated by calcium or magnesium. It is required for an interaction between MukE and MukB.

The protein localises to the cytoplasm. The protein resides in the nucleoid. Functionally, involved in chromosome condensation, segregation and cell cycle progression. May participate in facilitating chromosome segregation by condensation DNA from both sides of a centrally located replisome during cell division. Not required for mini-F plasmid partitioning. Probably acts via its interaction with MukB and MukE. Overexpression results in anucleate cells. It has a calcium binding activity. The sequence is that of Chromosome partition protein MukF from Vibrio parahaemolyticus serotype O3:K6 (strain RIMD 2210633).